The primary structure comprises 209 residues: MSQNSNLMREVRLFENHSEREQMENLSELFAVLNALEHLEKMFSRDHVTADEYKTECFKLIDQYKVTMRLVHGATSIEEFAKKYRLHCPAAIERIREGRPITVKDDQGNVLKHIASIVEQFITFLDSLRLNTRAVDDLYPVLDDLYNAINSTSRVPIDANVTTKVKKWHDRLSSMAATDEISDDEARQMIFDTEGAYQSFQKALNEQKH.

The 105-residue stretch at 1–105 (MSQNSNLMRE…REGRPITVKD (105 aa)) folds into the VPS28 N-terminal domain. The VPS28 C-terminal domain occupies 109-205 (NVLKHIASIV…AYQSFQKALN (97 aa)).

It belongs to the VPS28 family. Component of the ESCRT-I complex (endosomal sorting complex required for transport I).

The protein localises to the endosome. Its function is as follows. Component of the ESCRT-I complex, a regulator of vesicular trafficking process. This chain is Vacuolar protein sorting-associated protein 28 homolog, found in Caenorhabditis briggsae.